The chain runs to 371 residues: Putative glutamate--cysteine ligase 2 (371 aa).

It belongs to the glutamate--cysteine ligase type 2 family. YbdK subfamily.

The enzyme catalyses L-cysteine + L-glutamate + ATP = gamma-L-glutamyl-L-cysteine + ADP + phosphate + H(+). ATP-dependent carboxylate-amine ligase which exhibits weak glutamate--cysteine ligase activity. The chain is Putative glutamate--cysteine ligase 2 from Cupriavidus necator (strain ATCC 17699 / DSM 428 / KCTC 22496 / NCIMB 10442 / H16 / Stanier 337) (Ralstonia eutropha).